The sequence spans 199 residues: Molybdenum cofactor guanylyltransferase (199 aa).

GTP contacts are provided by residues leucine 12–glycine 14, lysine 25, asparagine 53, aspartate 71, and aspartate 101. Position 101 (aspartate 101) interacts with Mg(2+).

Belongs to the MobA family. In terms of assembly, monomer. Requires Mg(2+) as cofactor.

The protein localises to the cytoplasm. It catalyses the reaction Mo-molybdopterin + GTP + H(+) = Mo-molybdopterin guanine dinucleotide + diphosphate. Functionally, transfers a GMP moiety from GTP to Mo-molybdopterin (Mo-MPT) cofactor (Moco or molybdenum cofactor) to form Mo-molybdopterin guanine dinucleotide (Mo-MGD) cofactor. In Cupriavidus pinatubonensis (strain JMP 134 / LMG 1197) (Cupriavidus necator (strain JMP 134)), this protein is Molybdenum cofactor guanylyltransferase.